Consider the following 130-residue polypeptide: Large ribosomal subunit protein bL20 (130 aa).

Belongs to the bacterial ribosomal protein bL20 family.

Its function is as follows. Binds directly to 23S ribosomal RNA and is necessary for the in vitro assembly process of the 50S ribosomal subunit. It is not involved in the protein synthesizing functions of that subunit. The protein is Large ribosomal subunit protein bL20 of Nocardioides sp. (strain ATCC BAA-499 / JS614).